Reading from the N-terminus, the 125-residue chain is Oxytocin-neurophysin 1 (125 aa).

A signal peptide spans 1–19 (MAGPSLACCLLGLLALTSA). An intrachain disulfide couples Cys-20 to Cys-25. Gly-28 is subject to Glycine amide. 7 disulfides stabilise this stretch: Cys-41/Cys-85, Cys-44/Cys-58, Cys-52/Cys-75, Cys-59/Cys-65, Cys-92/Cys-104, Cys-98/Cys-116, and Cys-105/Cys-110.

This sequence belongs to the vasopressin/oxytocin family. Interacts with oxytocin receptor (Ki=1.5 nM). Interacts with vasopressin V1aR/AVPR1A (Ki=37 nM), V1bR/AVPR1B (Ki=222 nM), and V2R/AVPR2 receptors (Ki=823 nM).

Functionally, neurophysin 1 specifically binds oxytocin. Oxytocin causes contraction of the smooth muscle of the uterus and of the mammary gland. Acts by binding to oxytocin receptor (OXTR). The protein is Oxytocin-neurophysin 1 (OXT) of Sus scrofa (Pig).